A 498-amino-acid polypeptide reads, in one-letter code: Lipase 3 (498 aa).

Cysteines 60 and 91 form a disulfide. N-linked (GlcNAc...) asparagine glycosylation is present at Asn193. Residue Ser200 is the Acyl-ester intermediate of the active site. An N-linked (GlcNAc...) asparagine glycan is attached at Asn384. Residue His409 is the Charge relay system of the active site. An N-linked (GlcNAc...) asparagine glycan is attached at Asn418.

It belongs to the type-B carboxylesterase/lipase family.

The enzyme catalyses a triacylglycerol + H2O = a diacylglycerol + a fatty acid + H(+). The sequence is that of Lipase 3 (LIP3) from Yarrowia lipolytica (strain CLIB 122 / E 150) (Yeast).